The chain runs to 239 residues: Skn-1 dependent zygotic transcript 1 protein (239 aa).

In terms of biological role, may have a role in mesendoderm development during embryogenesis. This is Skn-1 dependent zygotic transcript 1 protein from Caenorhabditis briggsae.